The following is a 517-amino-acid chain: Ribose import ATP-binding protein RbsA 1 (517 aa).

ABC transporter domains follow at residues 11 to 251 and 263 to 507; these read LEMR…VGRD and YDPG…ALAT. 43-50 provides a ligand contact to ATP; it reads GENGAGKS.

The protein belongs to the ABC transporter superfamily. Ribose importer (TC 3.A.1.2.1) family. As to quaternary structure, the complex is composed of an ATP-binding protein (RbsA), two transmembrane proteins (RbsC) and a solute-binding protein (RbsB).

Its subcellular location is the cell inner membrane. The enzyme catalyses D-ribose(out) + ATP + H2O = D-ribose(in) + ADP + phosphate + H(+). Its function is as follows. Part of the ABC transporter complex RbsABC involved in ribose import. Responsible for energy coupling to the transport system. This is Ribose import ATP-binding protein RbsA 1 from Burkholderia ambifaria (strain ATCC BAA-244 / DSM 16087 / CCUG 44356 / LMG 19182 / AMMD) (Burkholderia cepacia (strain AMMD)).